The chain runs to 516 residues: MAMSPAAPLSVTELLLVSAVFCLVFWAVRASRPKVPKGLKRLPGPWGWPLLGHLLTLGKNPHVALARLSRRYGDVFQIRLGSTPVVVLSGLDTIKQALVRQGDDFKGRPDLYSSSFITEGQSMTFSPDSGPVWAARRRLAQDSLKSFSIASNPASSSSCYLEEHVSQEAENLIGRFQELMAAVGRFDPYSQLVVSAARVIGAMCFGRRFPQGSEEMLDVVRNSSKFVETASSGSPVDFFPILRYLPNRPLQRFKDFNQRFLRFLQKTVREHYEDFDRNSIQDITGALFKHSEKNSKANSGLIPQEKIVNLVNDIFGAGFDTITTALSWSLMYLVTNPRRQRKIQEELDAVVGRARQPRLSDRPQLPYLEAFILELFRHTSFVPFTIPHSTTRDTTLNGFHIPKECCIFINQWQINHDPQLWGDPEEFRPERFLTADGAAINKPLSEKVTLFGLGKRRCIGETLARWEVFLFLAILLQRLEFSVPPGVPVDLTPIYGLTMKHPRCEHVQARPRFSDQ.

O-linked (GlcNAc) serine glycosylation occurs at Ser69. Residues Phe226 and 361 to 365 (DRPQL) contribute to the substrate site. Cys458 is a heme binding site.

Belongs to the cytochrome P450 family. As to quaternary structure, interacts with PGRMC1; the interaction requires PGRMC1 homodimerization. The cofactor is heme.

The protein localises to the endoplasmic reticulum membrane. It is found in the microsome membrane. The enzyme catalyses an organic molecule + reduced [NADPH--hemoprotein reductase] + O2 = an alcohol + oxidized [NADPH--hemoprotein reductase] + H2O + H(+). The catalysed reaction is 17beta-estradiol + reduced [NADPH--hemoprotein reductase] + O2 = 2-hydroxy-17beta-estradiol + oxidized [NADPH--hemoprotein reductase] + H2O + H(+). It carries out the reaction 17beta-estradiol + reduced [NADPH--hemoprotein reductase] + O2 = 4-hydroxy-17beta-estradiol + oxidized [NADPH--hemoprotein reductase] + H2O + H(+). It catalyses the reaction estrone + reduced [NADPH--hemoprotein reductase] + O2 = 2-hydroxyestrone + oxidized [NADPH--hemoprotein reductase] + H2O + H(+). The enzyme catalyses estrone + reduced [NADPH--hemoprotein reductase] + O2 = 4-hydroxyestrone + oxidized [NADPH--hemoprotein reductase] + H2O + H(+). The catalysed reaction is cholesterol + reduced [NADPH--hemoprotein reductase] + O2 = 25-hydroxycholesterol + oxidized [NADPH--hemoprotein reductase] + H2O + H(+). It carries out the reaction all-trans-retinol + reduced [NADPH--hemoprotein reductase] + O2 = all-trans-retinal + oxidized [NADPH--hemoprotein reductase] + 2 H2O + H(+). It catalyses the reaction all-trans-retinal + reduced [NADPH--hemoprotein reductase] + O2 = all-trans-retinoate + oxidized [NADPH--hemoprotein reductase] + H2O + 2 H(+). The enzyme catalyses (5Z,8Z,11Z,14Z)-eicosatetraenoate + reduced [NADPH--hemoprotein reductase] + O2 = (14R,15S)-epoxy-(5Z,8Z,11Z)-eicosatrienoate + oxidized [NADPH--hemoprotein reductase] + H2O + H(+). The catalysed reaction is (5Z,8Z,11Z,14Z)-eicosatetraenoate + reduced [NADPH--hemoprotein reductase] + O2 = (14S,15R)-epoxy-(5Z,8Z,11Z)-eicosatrienoate + oxidized [NADPH--hemoprotein reductase] + H2O + H(+). It carries out the reaction (5Z,8Z,11Z,14Z,17Z)-eicosapentaenoate + reduced [NADPH--hemoprotein reductase] + O2 = (17R,18S)-epoxy-(5Z,8Z,11Z,14Z)-eicosatetraenoate + oxidized [NADPH--hemoprotein reductase] + H2O + H(+). It catalyses the reaction (4Z,7Z,10Z,13Z,16Z,19Z)-docosahexaenoate + reduced [NADPH--hemoprotein reductase] + O2 = (19R,20S)-epoxy-(4Z,7Z,10Z,13Z,16Z)-docosapentaenoate + oxidized [NADPH--hemoprotein reductase] + H2O + H(+). The enzyme catalyses (5S)-hydroperoxy-(6E,8Z,11Z,14Z)-eicosatetraenoate = 5-oxo-(6E,8Z,11Z,14Z)-eicosatetraenoate + H2O. The catalysed reaction is (12S)-hydroperoxy-(5Z,8Z,10E,14Z)-eicosatetraenoate = 12-oxo-(5Z,8Z,10E,14Z)-eicosatetraenoate + H2O. It carries out the reaction (15S)-hydroperoxy-(5Z,8Z,11Z,13E)-eicosatetraenoate = 15-oxo-(5Z,8Z,11Z,13E)-eicosatetraenoate + H2O. It catalyses the reaction (13S)-hydroperoxy-(9Z,11E)-octadecadienoate = 13-oxo-(9Z,11E)-octadecadienoate + H2O. The enzyme catalyses (5Z,8Z,11Z,14Z)-eicosatetraenoate + reduced [NADPH--hemoprotein reductase] + O2 = 13-hydroxy-(5Z,8Z,11Z,14Z)-eicosatetraenoate + oxidized [NADPH--hemoprotein reductase] + H2O + H(+). The catalysed reaction is (5Z,8Z,11Z,14Z)-eicosatetraenoate + reduced [NADPH--hemoprotein reductase] + O2 = 19-hydroxy-(5Z,8Z,11Z,14Z)-eicosatetraenoate + oxidized [NADPH--hemoprotein reductase] + H2O + H(+). It carries out the reaction (9Z,12Z)-octadecadienoate + reduced [NADPH--hemoprotein reductase] + O2 = 11-hydroxy-(9Z,12Z)-octadecadienoate + oxidized [NADPH--hemoprotein reductase] + H2O + H(+). It participates in cofactor metabolism; retinol metabolism. The protein operates within steroid metabolism; cholesterol metabolism. Its pathway is lipid metabolism; arachidonate metabolism. A cytochrome P450 monooxygenase involved in the metabolism of various endogenous substrates, including fatty acids, steroid hormones and vitamins. Mechanistically, uses molecular oxygen inserting one oxygen atom into a substrate, and reducing the second into a water molecule, with two electrons provided by NADPH via cytochrome P450 reductase (NADPH--hemoprotein reductase). Catalyzes the hydroxylation of carbon-hydrogen bonds. Exhibits high catalytic activity for the formation of hydroxyestrogens from estrone (E1) and 17beta-estradiol (E2), namely 2-hydroxy E1 and E2. Metabolizes cholesterol toward 25-hydroxycholesterol, a physiological regulator of cellular cholesterol homeostasis. May act as a major enzyme for all-trans retinoic acid biosynthesis in the liver. Catalyzes two successive oxidative transformation of all-trans retinol to all-trans retinal and then to the active form all-trans retinoic acid. Primarily catalyzes stereoselective epoxidation of the last double bond of polyunsaturated fatty acids (PUFA), displaying a strong preference for the (R,S) stereoisomer. Catalyzes bisallylic hydroxylation and omega-1 hydroxylation of PUFA. May also participate in eicosanoids metabolism by converting hydroperoxide species into oxo metabolites (lipoxygenase-like reaction, NADPH-independent). Plays a role in the oxidative metabolism of xenobiotics. Catalyzes the N-hydroxylation of heterocyclic amines and the O-deethylation of phenacetin. Metabolizes caffeine via N3-demethylation. The chain is Cytochrome P450 1A2 (CYP1A2) from Oryctolagus cuniculus (Rabbit).